Consider the following 1297-residue polypeptide: Regulator of V-ATPase in vacuolar membrane protein 1 (1297 aa).

Composition is skewed to basic and acidic residues over residues 1161–1171 (DQEIHENKDSQ) and 1260–1269 (AVEKTHDSPK). Disordered stretches follow at residues 1161–1182 (DQEIHENKDSQRNSTNEPVRNK) and 1260–1297 (AVEKTHDSPKLGKTLMGQDIRPTPDDVPEFNESAFSFE).

Component of the RAVE complex composed of rav1, rav2 and skp1. Interacts with vam2.

The protein resides in the cytoplasm. The protein localises to the nucleus. Its subcellular location is the endomembrane system. In terms of biological role, component of the RAVE complex which is required for stable assembly of the vacuolar ATPase complex V-ATPase. The polypeptide is Regulator of V-ATPase in vacuolar membrane protein 1 (rav1) (Schizosaccharomyces pombe (strain 972 / ATCC 24843) (Fission yeast)).